Here is a 1755-residue protein sequence, read N- to C-terminus: Transposon Ty1-NL1 Gag-Pol polyprotein (1755 aa).

Polar residues-rich tracts occupy residues 1–23 (MESQ…SVTS), 48–60 (TKAN…TPAS), 71–86 (SPQT…GPYQ), and 131–152 (PQYP…GNTF). Disordered regions lie at residues 1–86 (MESQ…GPYQ), 131–171 (PQYP…YVRP), and 350–420 (QQES…IRGS). Residues 153–165 (TDSSSADSDMTST) show a composition bias toward low complexity. The RNA-binding stretch occupies residues 299 to 401 (NNGIPINNKV…NSQSRTARAH (103 aa)). Over residues 363–372 (NPSDEKKDSR) the composition is skewed to basic and acidic residues. The span at 373-412 (TYTNTTKPKSITRNSQKPNNSQSRTARAHNVSTSNNSSGP) shows a compositional bias: polar residues. D461 (for protease activity; shared with dimeric partner) is an active-site residue. Residues 583–640 (NVHTSESTRKYPYPFIHRMLAHANAQTIRYSLKNNTITYFNESDVDWSSAIDYQCPDC) form an integrase-type zinc finger-like region. The Integrase catalytic domain maps to 660–835 (NSYEPFQYLH…AGLDISTLLP (176 aa)). Positions 671 and 736 each coordinate Mg(2+). Disordered regions lie at residues 956–1120 (SKAV…TCPK) and 1146–1172 (DSFK…SNAY). Positions 960 to 969 (SPTDSTPPST) are enriched in low complexity. Over residues 1005–1015 (STPQISDIEST) the composition is skewed to polar residues. Residues 1038 to 1053 (ESSHTSKSKDFRHSDS) show a composition bias toward basic and acidic residues. Polar residues-rich tracts occupy residues 1054–1082 (YSDN…QTSE) and 1095–1106 (SIDTSSSESNSL). The short motif at 1178 to 1212 (KKRSLEDNETEIKVSRDTWNTKNMRSLEPPRSKKR) is the Bipartite nuclear localization signal element. In terms of domain architecture, Reverse transcriptase Ty1/copia-type spans 1338 to 1476 (NNYYITQLDI…DILGLEIKYQ (139 aa)). Mg(2+) is bound by residues D1346, D1427, D1428, D1610, E1652, and D1685. The RNase H Ty1/copia-type domain occupies 1610 to 1752 (DASYGNQPYY…IKTFKLLTNK (143 aa)).

In terms of assembly, the capsid protein forms a homotrimer, from which the VLPs are assembled. The protease is a homodimer, whose active site consists of two apposed aspartic acid residues. In terms of processing, initially, virus-like particles (VLPs) are composed of the structural unprocessed proteins Gag and Gag-Pol, and also contain the host initiator methionine tRNA (tRNA(i)-Met) which serves as a primer for minus-strand DNA synthesis, and a dimer of genomic Ty RNA. Processing of the polyproteins occurs within the particle and proceeds by an ordered pathway, called maturation. First, the protease (PR) is released by autocatalytic cleavage of the Gag-Pol polyprotein yielding capsid protein p45 and a Pol-p154 precursor protein. This cleavage is a prerequisite for subsequent processing of Pol-p154 at the remaining sites to release the mature structural and catalytic proteins. Maturation takes place prior to the RT reaction and is required to produce transposition-competent VLPs.

It is found in the cytoplasm. The protein resides in the nucleus. The enzyme catalyses DNA(n) + a 2'-deoxyribonucleoside 5'-triphosphate = DNA(n+1) + diphosphate. It catalyses the reaction Endonucleolytic cleavage to 5'-phosphomonoester.. Functionally, capsid protein (CA) is the structural component of the virus-like particle (VLP), forming the shell that encapsulates the retrotransposons dimeric RNA genome. The particles are assembled from trimer-clustered units and there are holes in the capsid shells that allow for the diffusion of macromolecules. CA also has nucleocapsid-like chaperone activity, promoting primer tRNA(i)-Met annealing to the multipartite primer-binding site (PBS), dimerization of Ty1 RNA and initiation of reverse transcription. The aspartyl protease (PR) mediates the proteolytic cleavages of the Gag and Gag-Pol polyproteins after assembly of the VLP. Its function is as follows. Reverse transcriptase/ribonuclease H (RT) is a multifunctional enzyme that catalyzes the conversion of the retro-elements RNA genome into dsDNA within the VLP. The enzyme displays a DNA polymerase activity that can copy either DNA or RNA templates, and a ribonuclease H (RNase H) activity that cleaves the RNA strand of RNA-DNA heteroduplexes during plus-strand synthesis and hydrolyzes RNA primers. The conversion leads to a linear dsDNA copy of the retrotransposon that includes long terminal repeats (LTRs) at both ends. In terms of biological role, integrase (IN) targets the VLP to the nucleus, where a subparticle preintegration complex (PIC) containing at least integrase and the newly synthesized dsDNA copy of the retrotransposon must transit the nuclear membrane. Once in the nucleus, integrase performs the integration of the dsDNA into the host genome. This chain is Transposon Ty1-NL1 Gag-Pol polyprotein (TY1B-NL1), found in Saccharomyces cerevisiae (strain ATCC 204508 / S288c) (Baker's yeast).